Here is a 250-residue protein sequence, read N- to C-terminus: ATP synthase subunit a (250 aa).

6 consecutive transmembrane segments (helical) span residues 29 to 49 (ASLF…FATS), 84 to 104 (FFPL…LGMF), 114 to 134 (IIVT…YGFY), 143 to 163 (VFVP…IEII), 193 to 213 (FVAS…LPLI), and 216 to 236 (VALT…FAVL).

Belongs to the ATPase A chain family. As to quaternary structure, F-type ATPases have 2 components, CF(1) - the catalytic core - and CF(0) - the membrane proton channel. CF(1) has five subunits: alpha(3), beta(3), gamma(1), delta(1), epsilon(1). CF(0) has three main subunits: a(1), b(2) and c(9-12). The alpha and beta chains form an alternating ring which encloses part of the gamma chain. CF(1) is attached to CF(0) by a central stalk formed by the gamma and epsilon chains, while a peripheral stalk is formed by the delta and b chains.

It is found in the cell inner membrane. In terms of biological role, key component of the proton channel; it plays a direct role in the translocation of protons across the membrane. This Rhizobium johnstonii (strain DSM 114642 / LMG 32736 / 3841) (Rhizobium leguminosarum bv. viciae) protein is ATP synthase subunit a.